A 401-amino-acid chain; its full sequence is Alternative oxidase, mitochondrial (401 aa).

The segment at 53–81 (KRASLSLQPSVREAEKSQGPVVGSEGRGV) is disordered. Residues 184 to 204 (LFRIILLESIAGVPGMVGGTL) form a helical membrane-spanning segment. Fe cation contacts are provided by Glu-191, Glu-230, and His-233. Residues 249-269 (ALVLAAQGVFYNAFFLTYLIS) traverse the membrane as a helical segment. 4 residues coordinate Fe cation: Glu-281, Glu-282, Glu-335, and His-338.

It belongs to the alternative oxidase family. Fe cation serves as cofactor.

It localises to the mitochondrion inner membrane. Functionally, catalyzes cyanide-resistant oxygen consumption. May increase respiration when the cytochrome respiratory pathway is restricted, or in response to low temperatures. The sequence is that of Alternative oxidase, mitochondrial (AOX1) from Cryptococcus neoformans var. grubii serotype A (strain H99 / ATCC 208821 / CBS 10515 / FGSC 9487) (Filobasidiella neoformans var. grubii).